Here is a 283-residue protein sequence, read N- to C-terminus: Ribosomal RNA small subunit methyltransferase H (283 aa).

S-adenosyl-L-methionine contacts are provided by residues Gly31–His33, Asp50, Phe77, Asp93, and Gln100.

This sequence belongs to the methyltransferase superfamily. RsmH family.

It localises to the cytoplasm. The enzyme catalyses cytidine(1402) in 16S rRNA + S-adenosyl-L-methionine = N(4)-methylcytidine(1402) in 16S rRNA + S-adenosyl-L-homocysteine + H(+). Specifically methylates the N4 position of cytidine in position 1402 (C1402) of 16S rRNA. This chain is Ribosomal RNA small subunit methyltransferase H, found in Trichodesmium erythraeum (strain IMS101).